The following is a 138-amino-acid chain: Small ribosomal subunit protein uS12m (138 aa).

The transit peptide at methionine 1 to serine 29 directs the protein to the mitochondrion. The tract at residues methionine 36–proline 56 is disordered.

It belongs to the universal ribosomal protein uS12 family. Component of the mitochondrial small ribosomal subunit (mt-SSU). Mature mammalian 55S mitochondrial ribosomes consist of a small (28S) and a large (39S) subunit. The 28S small subunit contains a 12S ribosomal RNA (12S mt-rRNA) and 30 different proteins. The 39S large subunit contains a 16S rRNA (16S mt-rRNA), a copy of mitochondrial valine transfer RNA (mt-tRNA(Val)), which plays an integral structural role, and 52 different proteins.

The protein resides in the mitochondrion. This is Small ribosomal subunit protein uS12m (MRPS12) from Homo sapiens (Human).